The primary structure comprises 375 residues: Beta sliding clamp (375 aa).

It belongs to the beta sliding clamp family. As to quaternary structure, forms a ring-shaped head-to-tail homodimer around DNA which binds and tethers DNA polymerases and other proteins to the DNA. The DNA replisome complex has a single clamp-loading complex (3 tau and 1 each of delta, delta', psi and chi subunits) which binds 3 Pol III cores (1 core on the leading strand and 2 on the lagging strand) each with a beta sliding clamp dimer. Additional proteins in the replisome are other copies of gamma, psi and chi, Ssb, DNA helicase and RNA primase.

Its subcellular location is the cytoplasm. Confers DNA tethering and processivity to DNA polymerases and other proteins. Acts as a clamp, forming a ring around DNA (a reaction catalyzed by the clamp-loading complex) which diffuses in an ATP-independent manner freely and bidirectionally along dsDNA. Initially characterized for its ability to contact the catalytic subunit of DNA polymerase III (Pol III), a complex, multichain enzyme responsible for most of the replicative synthesis in bacteria; Pol III exhibits 3'-5' exonuclease proofreading activity. The beta chain is required for initiation of replication as well as for processivity of DNA replication. The sequence is that of Beta sliding clamp (dnaN) from Synechococcus elongatus (strain ATCC 33912 / PCC 7942 / FACHB-805) (Anacystis nidulans R2).